The sequence spans 811 residues: MFVYKRDGRQEKVAFDKITARVSRLCYGLDSDHVDPVEITQKVISGVYPGVTTIELDNLAAETAATMTTKHPDYAILAARIAVSNLHKQTEKVFSTVVQQLHDYVNPKTDKPAPMISDKIYDIVMKHKDELDSAIIYDRDFTYNFFGFKTLERSYLLRIDGKVAERPQHMIMRVAVGIHGEDIEAAIETYNLMSQRYFTHASPTLFNAGTPRPQLSSCFLVTMKDDSIEGIYDTLKMCAMISKTAGGIGINIHNIRATGSYIAGTNGTSNGIVPMIRVYNNTARYVDQGGNKRPGAFAAYLEPWHADVMDFLELRKTHGNEDFRAREMFYALWIPDLFMQRVERNEQWTFFCPNEAPGLADVWGDEFVALYEKYEKENRGRRSLPAQKVWYAILQSQVETGNPFMLYKDSCNRKSNQKNVGTIRCSNLCTEIVEYSSPDEVAVCNLASVALPTFIKDGKYNFQKLHDVVKVVTRNLNKIIDVNYYPVPEARRSNMRHRPVGLGVQGLADAFFALRLPFESAGAKKLNIQIFETIYHAALEASCEIAQVEGTYESYEGSPASQGILQYDMWNVNPTDLWDWAELKEKIAKHGIRNSLLVAPMPTASTSQILGFNECFEPYTSNMYQRRVLSGEFQIVNPWLLKDLVERDLWNEDMKNKLVMLDGSIQAIPEIPQDLKDLYKTVWEISQKTVIDYAADRGPFIDQSQSLNIHLKDPSYGKITSMHFYGWKKGLKTGMYYLRTMAASAAIKFTVDPVALRARNEESNEENKKPVIKNGKAEISAEPTKEEIDIYNEKVLACSIKNPEACEMCSA.

The region spanning 1 to 92 (MFVYKRDGRQ…VSNLHKQTEK (92 aa)) is the ATP-cone domain. ATP is bound by residues 5–6 (KR), 11–17 (EKVAFDK), T53, and D57. The GDP site is built by S202 and S217. A disulfide bridge links C218 with C444. Residues 226–228 (DSI), K243, R256, and 263–264 (AG) contribute to the dTTP site. N427 contributes to the GDP binding site. The Proton acceptor role is filled by N427. Residue C429 is the Cysteine radical intermediate of the active site. GDP contacts are provided by residues E431 and 603 to 606 (TAST). The active-site Proton acceptor is E431.

It belongs to the ribonucleoside diphosphate reductase large chain family. Heterodimer of a large and a small subunit. Interacts with SPD1.

It catalyses the reaction a 2'-deoxyribonucleoside 5'-diphosphate + [thioredoxin]-disulfide + H2O = a ribonucleoside 5'-diphosphate + [thioredoxin]-dithiol. Its activity is regulated as follows. Under complex allosteric control mediated by deoxynucleoside triphosphates and ATP binding to separate specificity and activation sites on the large subunit. The type of nucleotide bound at the specificity site determines substrate preference. It seems probable that ATP makes the enzyme reduce CDP and UDP, dGTP favors ADP reduction and dTTP favors GDP reduction. Stimulated by ATP and inhibited by dATP binding to the activity site. Its function is as follows. Provides the precursors necessary for DNA synthesis. Catalyzes the biosynthesis of deoxyribonucleotides from the corresponding ribonucleotides. In Schizosaccharomyces pombe (strain 972 / ATCC 24843) (Fission yeast), this protein is Ribonucleoside-diphosphate reductase large chain (cdc22).